We begin with the raw amino-acid sequence, 166 residues long: CDP-archaeol synthase (166 aa).

Helical transmembrane passes span 42 to 62 (FFGGVVSGVLVGLIEIWAATA), 73 to 93 (FLSVTLLATGALLGDLAKSFL), 104 to 124 (SWFLADQYDLVVGSFLLILIF), and 128 to 148 (WLFGTITLPIAVWIVVMTPLL).

This sequence belongs to the CDP-archaeol synthase family. Requires Mg(2+) as cofactor.

It is found in the cell membrane. It carries out the reaction 2,3-bis-O-(geranylgeranyl)-sn-glycerol 1-phosphate + CTP + H(+) = CDP-2,3-bis-O-(geranylgeranyl)-sn-glycerol + diphosphate. The protein operates within membrane lipid metabolism; glycerophospholipid metabolism. In terms of biological role, catalyzes the formation of CDP-2,3-bis-(O-geranylgeranyl)-sn-glycerol (CDP-archaeol) from 2,3-bis-(O-geranylgeranyl)-sn-glycerol 1-phosphate (DGGGP) and CTP. This reaction is the third ether-bond-formation step in the biosynthesis of archaeal membrane lipids. The polypeptide is CDP-archaeol synthase (Methanoculleus marisnigri (strain ATCC 35101 / DSM 1498 / JR1)).